Reading from the N-terminus, the 693-residue chain is DNA ligase (693 aa).

NAD(+) is bound by residues 35–39 (DAEYD), 84–85 (SI), and Glu-121. Residue Lys-123 is the N6-AMP-lysine intermediate of the active site. Residues Arg-144, Glu-180, Lys-297, and Lys-321 each contribute to the NAD(+) site. The Zn(2+) site is built by Cys-418, Cys-421, Cys-436, and Cys-442. Residues 601–690 (PASGSVAGLT…EQSPINNKDG (90 aa)) enclose the BRCT domain.

This sequence belongs to the NAD-dependent DNA ligase family. LigA subfamily. The cofactor is Mg(2+). Mn(2+) serves as cofactor.

It catalyses the reaction NAD(+) + (deoxyribonucleotide)n-3'-hydroxyl + 5'-phospho-(deoxyribonucleotide)m = (deoxyribonucleotide)n+m + AMP + beta-nicotinamide D-nucleotide.. DNA ligase that catalyzes the formation of phosphodiester linkages between 5'-phosphoryl and 3'-hydroxyl groups in double-stranded DNA using NAD as a coenzyme and as the energy source for the reaction. It is essential for DNA replication and repair of damaged DNA. The sequence is that of DNA ligase from Azoarcus sp. (strain BH72).